The chain runs to 150 residues: Macrodomain Ter protein (150 aa).

It belongs to the MatP family. In terms of assembly, homodimer.

Its subcellular location is the cytoplasm. Required for spatial organization of the terminus region of the chromosome (Ter macrodomain) during the cell cycle. Prevents early segregation of duplicated Ter macrodomains during cell division. Binds specifically to matS, which is a 13 bp signature motif repeated within the Ter macrodomain. The chain is Macrodomain Ter protein from Escherichia coli O81 (strain ED1a).